The following is a 126-amino-acid chain: Fluoride-specific ion channel FluC (126 aa).

4 consecutive transmembrane segments (helical) span residues 4-24 (ILAI…IGLW), 35-55 (YGTF…LTLI), 68-88 (MLVT…YESF), and 100-120 (IGYM…GVGL). Na(+)-binding residues include glycine 75 and threonine 78.

Belongs to the fluoride channel Fluc/FEX (TC 1.A.43) family.

The protein localises to the cell membrane. The catalysed reaction is fluoride(in) = fluoride(out). Its activity is regulated as follows. Na(+) is not transported, but it plays an essential structural role and its presence is essential for fluoride channel function. Functionally, fluoride-specific ion channel. Important for reducing fluoride concentration in the cell, thus reducing its toxicity. The protein is Fluoride-specific ion channel FluC of Chloroflexus aurantiacus (strain ATCC 29366 / DSM 635 / J-10-fl).